The primary structure comprises 236 residues: Ascorbate-specific transmembrane electron transporter 1 (236 aa).

Residues 1–11 (MGLGLGVRAAP) lie on the Cytoplasmic side of the membrane. The helical transmembrane segment at 12–32 (FTYAAHALAVAAAAMVLVWSI) threads the bilayer. The Cytochrome b561 domain maps to 15-219 (AAHALAVAAA…FGASVVVAAI (205 aa)). Topologically, residues 33-50 (QFRGGLAIESTNKNLIFN) are extracellular. Residues 51–71 (VHPVLMLIGYVIIGGEAIMVY) traverse the membrane as a helical segment. H52 serves as a coordination point for heme b. 67–75 (AIMVYRVLP) lines the L-ascorbate pocket. Residues 72–84 (RVLPTSNHDTTKL) are Cytoplasmic-facing. Residues 85-105 (IHLILHGIALVLGAVGIYFAF) traverse the membrane as a helical segment. Residues H86 and H120 each coordinate heme b. At 106–122 (KNHNESGIANLYSLHSW) the chain is on the extracellular side. 116 to 125 (LYSLHSWIGI) serves as a coordination point for monodehydro-L-ascorbate radical. A helical membrane pass occupies residues 123-143 (IGIGTITLYGIQWIIGFVTFF). The Cytoplasmic portion of the chain corresponds to 144-153 (FPGAAPNVKK). The chain crosses the membrane as a helical span at residues 154-174 (GVLPWHVLFGLFVYILALANA). H159 lines the heme b pocket. At 175-201 (ELGFLEKLTFLESSGLDKYGTEAFLVN) the chain is on the extracellular side. A helical transmembrane segment spans residues 202-222 (FTALVVVLFGASVVVAAIAPV). Residues 223-236 (RLEEPQGYDPIPEN) are Cytoplasmic-facing.

Heme b serves as cofactor.

Its subcellular location is the membrane. With respect to regulation, inhibited by diethylpyrocarbonate. Functionally, two-heme-containing cytochrome. Catalyzes ascorbate-dependent trans-membrane electron transfer by utilizing a concerted H(+)/e(-) transfer mechanism. This Zea mays (Maize) protein is Ascorbate-specific transmembrane electron transporter 1 (ZCYB).